We begin with the raw amino-acid sequence, 459 residues long: UDP-N-acetylmuramate--L-alanine ligase (459 aa).

113 to 119 contacts ATP; that stretch reads GSHGKTT.

It belongs to the MurCDEF family.

It is found in the cytoplasm. The catalysed reaction is UDP-N-acetyl-alpha-D-muramate + L-alanine + ATP = UDP-N-acetyl-alpha-D-muramoyl-L-alanine + ADP + phosphate + H(+). Its pathway is cell wall biogenesis; peptidoglycan biosynthesis. Functionally, cell wall formation. The chain is UDP-N-acetylmuramate--L-alanine ligase from Persephonella marina (strain DSM 14350 / EX-H1).